The primary structure comprises 283 residues: Nucleotide-binding protein DR_1434 (283 aa).

Residue 8–15 (GLSGSGKS) participates in ATP binding. Position 57–60 (57–60 (DTRT)) interacts with GTP.

This sequence belongs to the RapZ-like family.

Displays ATPase and GTPase activities. The protein is Nucleotide-binding protein DR_1434 of Deinococcus radiodurans (strain ATCC 13939 / DSM 20539 / JCM 16871 / CCUG 27074 / LMG 4051 / NBRC 15346 / NCIMB 9279 / VKM B-1422 / R1).